A 294-amino-acid polypeptide reads, in one-letter code: ATP synthase gamma chain (294 aa).

This sequence belongs to the ATPase gamma chain family. In terms of assembly, F-type ATPases have 2 components, CF(1) - the catalytic core - and CF(0) - the membrane proton channel. CF(1) has five subunits: alpha(3), beta(3), gamma(1), delta(1), epsilon(1). CF(0) has three main subunits: a, b and c.

The protein resides in the cell inner membrane. In terms of biological role, produces ATP from ADP in the presence of a proton gradient across the membrane. The gamma chain is believed to be important in regulating ATPase activity and the flow of protons through the CF(0) complex. This chain is ATP synthase gamma chain, found in Rhizobium johnstonii (strain DSM 114642 / LMG 32736 / 3841) (Rhizobium leguminosarum bv. viciae).